An 863-amino-acid chain; its full sequence is Penicillin-binding protein 1A (863 aa).

Residues 1–28 (MTENRDNKTSQSEKTTQKKKKKKFKAFK) lie on the Cytoplasmic side of the membrane. A helical; Signal-anchor for type II membrane protein membrane pass occupies residues 29–49 (IILITFITLIVISLVTAIGIT). At 50–863 (LAIIKTSPDI…KPIIRPKKHF (814 aa)) the chain is on the extracellular side. The interval 71 to 248 (SKIYDDKGEL…PSVYYPYSRT (178 aa)) is transglycosylase. Glu110 serves as the catalytic Proton donor; for transglycosylase activity. A transpeptidase region spans residues 392–674 (ASAVLTDYHT…AAALFGKIMN (283 aa)). Residue Ser431 is the Acyl-ester intermediate; for transpeptidase activity of the active site. Positions 774–863 (DDDMYVLPDK…KPIIRPKKHF (90 aa)) are disordered. Polar residues predominate over residues 808–836 (EDATNEASTEPSPNTDTVPEDSTNNLDPT). Over residues 837 to 846 (KNTEKKPSDK) the composition is skewed to basic and acidic residues. Basic residues predominate over residues 847–863 (KNKKHVIKPIIRPKKHF).

This sequence in the N-terminal section; belongs to the glycosyltransferase 51 family. In the C-terminal section; belongs to the transpeptidase family.

It localises to the cell membrane. It carries out the reaction [GlcNAc-(1-&gt;4)-Mur2Ac(oyl-L-Ala-gamma-D-Glu-L-Lys-D-Ala-D-Ala)](n)-di-trans,octa-cis-undecaprenyl diphosphate + beta-D-GlcNAc-(1-&gt;4)-Mur2Ac(oyl-L-Ala-gamma-D-Glu-L-Lys-D-Ala-D-Ala)-di-trans,octa-cis-undecaprenyl diphosphate = [GlcNAc-(1-&gt;4)-Mur2Ac(oyl-L-Ala-gamma-D-Glu-L-Lys-D-Ala-D-Ala)](n+1)-di-trans,octa-cis-undecaprenyl diphosphate + di-trans,octa-cis-undecaprenyl diphosphate + H(+). The catalysed reaction is Preferential cleavage: (Ac)2-L-Lys-D-Ala-|-D-Ala. Also transpeptidation of peptidyl-alanyl moieties that are N-acyl substituents of D-alanine.. It functions in the pathway cell wall biogenesis; peptidoglycan biosynthesis. In terms of biological role, cell wall formation. Synthesis of cross-linked peptidoglycan from the lipid intermediates. The enzyme has a penicillin-insensitive transglycosylase N-terminal domain (formation of linear glycan strands) and a penicillin-sensitive transpeptidase C-terminal domain (cross-linking of the peptide subunits). This Clostridium novyi (strain NT) protein is Penicillin-binding protein 1A (pbpA).